A 350-amino-acid chain; its full sequence is UDP-3-O-acylglucosamine N-acyltransferase (350 aa).

Histidine 257 serves as the catalytic Proton acceptor.

The protein belongs to the transferase hexapeptide repeat family. LpxD subfamily. Homotrimer.

The catalysed reaction is a UDP-3-O-[(3R)-3-hydroxyacyl]-alpha-D-glucosamine + a (3R)-hydroxyacyl-[ACP] = a UDP-2-N,3-O-bis[(3R)-3-hydroxyacyl]-alpha-D-glucosamine + holo-[ACP] + H(+). The protein operates within bacterial outer membrane biogenesis; LPS lipid A biosynthesis. Its function is as follows. Catalyzes the N-acylation of UDP-3-O-acylglucosamine using 3-hydroxyacyl-ACP as the acyl donor. Is involved in the biosynthesis of lipid A, a phosphorylated glycolipid that anchors the lipopolysaccharide to the outer membrane of the cell. The protein is UDP-3-O-acylglucosamine N-acyltransferase of Chelativorans sp. (strain BNC1).